The primary structure comprises 282 residues: Cyclic AMP-dependent transcription factor ATF-5 (282 aa).

The tract at residues 1–21 is required for protein stabilization induced by IL1B; sequence MSLLATLGLELDRALLPASGL. Position 29 is an N6-acetyllysine; by EP300 (K29). 2 disordered regions span residues 116–152 and 173–238; these read FLDAPPLPPPSPPPLPPPPLPPAPSLPLSLPSFDLPQ and EEVG…ALEG. Positions 119–217 are interaction with PTP4A1; that stretch reads APPLPPPSPP…GDRKQKKRDQ (99 aa). Over residues 120–140 the composition is skewed to pro residues; that stretch reads PPLPPPSPPPLPPPPLPPAPS. Low complexity predominate over residues 141 to 150; it reads LPLSLPSFDL. Positions 178–194 are enriched in pro residues; that stretch reads PPLPPPQQPPPPSPPQP. One can recognise a bZIP domain in the interval 208–271; the sequence is GDRKQKKRDQ…QYVKDLLIEV (64 aa). The interval 210-230 is basic motif; that stretch reads RKQKKRDQNKSAALRYRQRKR. The segment at 236–250 is leucine-zipper; that stretch reads LEGECQGLEARNREL. A Phosphoserine modification is found at S256.

Belongs to the bZIP family. Binds DNA as a dimer. Interacts with PTP4A1/PRL-1. Interacts with CCND3, but not with CCND1 or CCND2. Interacts with HSPA1A or HSPA1B; the interaction protects ATF5 from degradation via proteasome-dependent and caspase-dependent processes. Interacts (via C-terminal region) with NPM1 (via C-terminal region); the interaction leads to loss of association between HSPA1A or HSPA1B and ATF5 and promotes ATF5 degradation via proteasome-dependent and caspase-dependent processes. Interacts with NLK; the interaction stabilizes ATF5 at the protein level in a kinase-independent manner. Interacts with alpha-tubulin, gamma-tubulin members TUBGCP2 and TUBGCP4, PCNT; the ATF5:PCNT:polyglutamylated tubulin (PGT) tripartite unites the mother centriole and the pericentriolar material (PCM) in the centrosome. Interacts with CEBPB and EP300; EP300 is required for ATF5 and CEBPB interaction and DNA binding. Ubiquitinated by CDC34 and UBE2B in order to be degraded by the proteasome. Cisplatin inhibits ubiquitination and proteasome-mediated degradation by inhibiting the interaction with CDC34. Ubiquitination and degradation by the proteasome are inhibited by NLK in a kinase-independent manner. Post-translationally, phosphorylated by NLK, probably at Ser-92, Thr-94, Ser-126 and Ser-190. In terms of processing, acetylated at Lys-29 by EP300, the acetylation enhances the interaction with CEBPB, DNA-binding and transactivation activity. In terms of tissue distribution, widely expressed with higher expression levels in liver.

It localises to the cytoplasm. It is found in the nucleus. Its subcellular location is the cytoskeleton. The protein resides in the microtubule organizing center. The protein localises to the centrosome. Transcription factor that either stimulates or represses gene transcription through binding of different DNA regulatory elements such as cAMP response element (CRE) (consensus: 5'-GTGACGT[AC][AG]-3'), ATF5-specific response element (ARE) (consensus: 5'-C[CT]TCT[CT]CCTT[AT]-3') but also the amino acid response element (AARE), present in many viral and cellular promoters. Critically involved, often in a cell type-dependent manner, in cell survival, proliferation, and differentiation. Its transcriptional activity is enhanced by CCND3 and slightly inhibited by CDK4. Important regulator of the cerebral cortex formation, functions in cerebral cortical neuroprogenitor cells to maintain proliferation and to block differentiation into neurons. Must be down-regulated in order for such cells to exit the cycle and differentiate. Participates in the pathways by which SHH promotes cerebellar granule neuron progenitor cells proliferation. Critical for survival of mature olfactory sensory neurons (OSN), directs expression of OSN-specific genes. May be involved in osteogenic differentiation. Promotes cell proliferation and survival by inducing the expression of EGR1 sinergistically with ELK1. Once acetylated by EP300, binds to ARE sequences on target genes promoters, such as BCL2 and EGR1. Plays an anti-apoptotic role through the transcriptional regulation of BCL2, this function seems to be cell type-dependent. Cooperates with NR1I3/CAR in the transcriptional activation of CYP2B6 in liver. In hepatic cells, represses CRE-dependent transcription and inhibits proliferation by blocking at G2/M phase. May act as a negative regulator of IL1B transduction pathway in liver. Upon IL1B stimulus, cooperates with NLK to activate the transactivation activity of C/EBP subfamily members. Besides its function of transcription factor, acts as a cofactor of CEBPB to activate CEBPA and promote adipocyte differentiation. Regulates centrosome dynamics in a cell-cycle- and centriole-age-dependent manner. Forms 9-foci symmetrical ring scaffold around the mother centriole to control centrosome function and the interaction between centrioles and pericentriolar material. This is Cyclic AMP-dependent transcription factor ATF-5 (ATF5) from Homo sapiens (Human).